The sequence spans 396 residues: MQQKALTKKLKNFTMNFGPQHPAAHGVLRLVLELNGEVVNRADPHIGLLHRGTEKLIEYKNYLQALPYFDRLDYVSMMAQEHAYSLAVEKLLGCEVPKRAQYIRVLFCEITRILNHLMAVTTHALDVGAMTPFLWGFEEREKLMEFYERVSGARMHAAYIRPGGVSQDMPMGLSEDIYKFAKQFGSRIDEIEDVLSSNRIWKQRLVDIGTVSAEEALDWGFSGVMLRGSGIAWDLRKTQPYDVYDELEFDIPVGTKGDCYDRYLIRVEEMRQSLKLIMQCLNKMPTGVIKVDDKKISPPSRVDMKDSMEALIHHFKLYTEGYSVPIGETYTAVEAPKGEFGVYLVSDGSSKPYRCKIKAPGFSHLQGLNFMSKGHMIADVVTIIGTQDIVFGEVDR.

The protein belongs to the complex I 49 kDa subunit family.

The protein localises to the mitochondrion. It catalyses the reaction a ubiquinone + NADH + 5 H(+)(in) = a ubiquinol + NAD(+) + 4 H(+)(out). Core subunit of the mitochondrial membrane respiratory chain NADH dehydrogenase (Complex I) that is believed to belong to the minimal assembly required for catalysis. Complex I functions in the transfer of electrons from NADH to the respiratory chain. The immediate electron acceptor for the enzyme is believed to be ubiquinone. Component of the iron-sulfur (IP) fragment of the enzyme. Component of the iron-sulfur (IP) fragment of the enzyme. In Reclinomonas americana, this protein is NADH-ubiquinone oxidoreductase 49 kDa subunit (NAD7).